A 61-amino-acid polypeptide reads, in one-letter code: Cobrotoxin-c (61 aa).

4 cysteine pairs are disulfide-bonded: cysteine 3–cysteine 23, cysteine 17–cysteine 40, cysteine 42–cysteine 53, and cysteine 54–cysteine 59.

Belongs to the three-finger toxin family. Short-chain subfamily. Type I alpha-neurotoxin sub-subfamily. In terms of tissue distribution, expressed by the venom gland.

The protein resides in the secreted. Its function is as follows. Produces peripheral paralysis by blocking neuromuscular transmission at the postsynaptic site. Binds to the nicotinic acetylcholine receptor. The protein is Cobrotoxin-c of Naja kaouthia (Monocled cobra).